A 627-amino-acid polypeptide reads, in one-letter code: Muscarinic acetylcholine receptor gar-2 (627 aa).

Over 1 to 9 (MAVASVLLA) the chain is Extracellular. Residues 10-30 (LFMLFLSIVTVIGNLAVLLSY) form a helical membrane-spanning segment. At 31 to 41 (YLDKNIRQPTN) the chain is on the cytoplasmic side. Residues 42–62 (YFIFSLAISDLLIGLEGIPVY) traverse the membrane as a helical segment. The Extracellular segment spans residues 63–81 (TAFYLNNNEWIWGDVLCDL). Cys79 and Cys160 are oxidised to a cystine. Residues 82–102 (WLSIDYIVCLASIYTVLGITV) traverse the membrane as a helical segment. At 103-122 (DRYYSVKKPATYRNWRTPGR) the chain is on the cytoplasmic side. Residues 123 to 143 (VVLIIIFIWLVPSILFSVSIF) traverse the membrane as a helical segment. The Extracellular segment spans residues 144–172 (GYGTFTGTGRILKETECYVQFMTNPYLNM). The helical transmembrane segment at 173 to 193 (GMYISYYWTTLFVMLYLYWGI) threads the bilayer. At 194-549 (YRAAKKLALK…ENRARKALRT (356 aa)) the chain is on the cytoplasmic side. Disordered regions lie at residues 222-266 (VSVR…VGTP), 423-442 (REDENKNEEEKQKNGLENGG), and 449-475 (ANDEQQPSTSKESEQKEEMTPENHDPN). The segment covering 231–264 (NSSSDSPNDTSNSSKCFRTAPPTTTVQTTQTNVG) has biased composition (low complexity). The segment covering 459–475 (KESEQKEEMTPENHDPN) has biased composition (basic and acidic residues). Residues 550–570 (ITFILGSFIILWTPFYVLATI) traverse the membrane as a helical segment. The Extracellular portion of the chain corresponds to 571-586 (YGFCETCKASPSFNTL). Residues 587 to 609 (YTISYYLCYMNSPLNPFCYAMAN) form a helical membrane-spanning segment. The Cytoplasmic portion of the chain corresponds to 610–627 (QQFKKTLTRIFKGDFRRV).

The protein belongs to the G-protein coupled receptor 1 family. Muscarinic acetylcholine receptor subfamily. Expressed in putative sensory neurons, many cells of the ventral cord and in the HSN motor neurons. Expressed in some cholinergic motor neurons and GABAergic motor neurons, which are the two major types of ventral cord motor neurons.

Its subcellular location is the cell membrane. It is found in the cell projection. The protein localises to the axon. Its function is as follows. The muscarinic acetylcholine receptor mediates various cellular responses, including inhibition of adenylate cyclase, breakdown of phosphoinositides and modulation of potassium channels through the action of G proteins. Primary transducing effect is Pi turnover. Regulates the activity of ventral cord motor neurons. Couples to the G(o)-alpha G-protein subunit goa-1 to negatively regulate cholinergic receptor activity in the presence of high levels of the neurotransmitter acetylcholine in ventral cord motor neurons. As acetylcholine depolarizes body wall muscles, modulation of acetylcholine levels most likely results in the control locomotory behavior and egg-laying. The sequence is that of Muscarinic acetylcholine receptor gar-2 from Caenorhabditis elegans.